A 217-amino-acid chain; its full sequence is Cytochrome c biogenesis ATP-binding export protein CcmA (217 aa).

The ABC transporter domain maps to 16–214; it reads LVLEQLSCER…AHGQAEVTEG (199 aa). Residue 48–55 participates in ATP binding; that stretch reads GANGAGKT.

This sequence belongs to the ABC transporter superfamily. CcmA exporter (TC 3.A.1.107) family. As to quaternary structure, the complex is composed of two ATP-binding proteins (CcmA) and two transmembrane proteins (CcmB).

It is found in the cell inner membrane. It carries out the reaction heme b(in) + ATP + H2O = heme b(out) + ADP + phosphate + H(+). Part of the ABC transporter complex CcmAB involved in the biogenesis of c-type cytochromes; once thought to export heme, this seems not to be the case, but its exact role is uncertain. Responsible for energy coupling to the transport system. The sequence is that of Cytochrome c biogenesis ATP-binding export protein CcmA from Alcanivorax borkumensis (strain ATCC 700651 / DSM 11573 / NCIMB 13689 / SK2).